We begin with the raw amino-acid sequence, 214 residues long: Leucyl/phenylalanyl-tRNA--protein transferase (214 aa).

The protein belongs to the L/F-transferase family.

It localises to the cytoplasm. It catalyses the reaction N-terminal L-lysyl-[protein] + L-leucyl-tRNA(Leu) = N-terminal L-leucyl-L-lysyl-[protein] + tRNA(Leu) + H(+). The catalysed reaction is N-terminal L-arginyl-[protein] + L-leucyl-tRNA(Leu) = N-terminal L-leucyl-L-arginyl-[protein] + tRNA(Leu) + H(+). It carries out the reaction L-phenylalanyl-tRNA(Phe) + an N-terminal L-alpha-aminoacyl-[protein] = an N-terminal L-phenylalanyl-L-alpha-aminoacyl-[protein] + tRNA(Phe). Functionally, functions in the N-end rule pathway of protein degradation where it conjugates Leu, Phe and, less efficiently, Met from aminoacyl-tRNAs to the N-termini of proteins containing an N-terminal arginine or lysine. The chain is Leucyl/phenylalanyl-tRNA--protein transferase from Cereibacter sphaeroides (strain ATCC 17023 / DSM 158 / JCM 6121 / CCUG 31486 / LMG 2827 / NBRC 12203 / NCIMB 8253 / ATH 2.4.1.) (Rhodobacter sphaeroides).